Consider the following 187-residue polypeptide: uncharacterized protein (187 aa).

This is an uncharacterized protein from Acanthamoeba polyphaga mimivirus (APMV).